The chain runs to 320 residues: uncharacterized protein (320 aa).

The protein belongs to the anthranilate phosphoribosyltransferase family.

This is an uncharacterized protein from Escherichia coli (strain K12).